The primary structure comprises 478 residues: Nuclear distribution protein PAC1 (478 aa).

The LisH domain maps to 9–41 (QAEELHKAMIAYLLSANLPKSAAALREELADSV). Residues 60–87 (TSVVRLQKKIMDLESRNNALQSELDSAT) are a coiled coil. 8 WD repeats span residues 113–154 (SHRE…RTIK), 156–196 (HTKA…KNIR), 200–247 (GHDH…CVKT), 250–289 (GHVD…TKST), 292–352 (GHEH…IKTL), 354–393 (GHDN…KCVR), 398–439 (AHGH…GASA), and 440–477 (INGV…RVFA).

This sequence belongs to the WD repeat LIS1/nudF family. Self-associates. Interacts with NDL1 and dynein.

The protein resides in the cytoplasm. It is found in the cytoskeleton. Its subcellular location is the spindle pole. Functionally, positively regulates the activity of the minus-end directed microtubule motor protein dynein. May enhance dynein-mediated microtubule sliding by targeting dynein to the microtubule plus end. Required for nuclear migration during vegetative growth as well as development. Required for retrograde early endosome (EE) transport from the hyphal tip. Required for localization of dynein to the mitotic spindle poles. Recruits additional proteins to the dynein complex at SPBs. This Paracoccidioides brasiliensis (strain Pb03) protein is Nuclear distribution protein PAC1.